Here is a 970-residue protein sequence, read N- to C-terminus: uncharacterized protein (970 aa).

A helical membrane pass occupies residues 12–32 (VIFFSVFFVIFFLFIESSVGF).

This sequence to E.coli YtfN.

The protein resides in the membrane. This is an uncharacterized protein from Buchnera aphidicola subsp. Acyrthosiphon pisum (strain APS) (Acyrthosiphon pisum symbiotic bacterium).